We begin with the raw amino-acid sequence, 376 residues long: UDP-N-acetylglucosamine 2-epimerase (376 aa).

Residues Arg-10, Lys-15, Asp-95, Glu-117, His-213, Gln-271, Phe-276, 290–292 (SGG), Glu-296, and Arg-313 contribute to the substrate site.

Belongs to the UDP-N-acetylglucosamine 2-epimerase family. In terms of assembly, homodimer.

Its subcellular location is the cytoplasm. The enzyme catalyses UDP-N-acetyl-alpha-D-glucosamine = UDP-N-acetyl-alpha-D-mannosamine. It functions in the pathway bacterial outer membrane biogenesis; enterobacterial common antigen biosynthesis. Catalyzes the reversible epimerization at C-2 of UDP-N-acetylglucosamine (UDP-GlcNAc) and thereby provides bacteria with UDP-N-acetylmannosamine (UDP-ManNAc), the activated donor of ManNAc residues. The polypeptide is UDP-N-acetylglucosamine 2-epimerase (Salmonella typhimurium (strain LT2 / SGSC1412 / ATCC 700720)).